The following is a 397-amino-acid chain: Serine protease MT3772 (397 aa).

4 helical membrane-spanning segments follow: residues 9 to 29 (IAVLAVAFIAAISGWRAGALG), 32 to 52 (LSFGGVLLGATAGVLLAPHIV), 62 to 82 (LFAALFLILALVVVGEVAGVV), and 102 to 122 (VIGVGVQLVVVLTAAWLLAMP). A disulfide bond links cysteine 214 and cysteine 395. Catalysis depends on histidine 235, which acts as the Proton acceptor. Residue aspartate 264 is part of the active site. The Charge relay system role is filled by serine 343.

The protein belongs to the peptidase S1C family. Monomer.

The protein localises to the membrane. In terms of biological role, required for M.tuberculosis resistance to oxidative stress in addition to its role in resistance to acid, which is essential for virulence. The polypeptide is Serine protease MT3772 (Mycobacterium tuberculosis (strain CDC 1551 / Oshkosh)).